A 33-amino-acid chain; its full sequence is DCLGWFKSCDPKNDKCCKNYTCSRRDRWCKYDL.

Disulfide bonds link Cys-2/Cys-17, Cys-9/Cys-22, and Cys-16/Cys-29. A Leucine amide modification is found at Leu-33.

It belongs to the neurotoxin 10 (Hwtx-1) family. 04 (CcoTx1) subfamily. Expressed by the venom gland.

It localises to the secreted. Functionally, inhibits many voltage-gated sodium channels and one voltage-gated calcium channel (Cav2.2/CACNA1B (IC(50)=400 nM), Nav1.2/SCN2A (IC(50)=3-70 nM), Nav1.1/SCN1A (IC(50)=523-1060 nM), Nav1.7/SCN9A (IC(50)=129.1-5120 nM), Nav1.4/SCN4A (IC(50)=263-888 nM or &gt;10 uM) and Nav1.5/SCN5A (IC(50)=188-323 nM or &gt;10 uM)). It acts by shifting the voltage dependence of channel activation to more depolarized potentials and by blocking the inward component of the sodium current. It shows moderate affinity for lipid bilayers. On Nav1.7/SCN9A, it has been shown to interact with the S3-S4 loop of domain DII (site 4). Is significantly more potent against Nav1.2/SCN2A than the other Nav channel subtypes. In vivo, this toxin causes general ataxia, lack of response to stimuli, and semiparalysis. After a few minutes, the mice are unable to stand, and breathing is reduced in rhythm and intensity. Symptoms gradually increase with progressive slowing of breathing and flaccid paralysis, death occurred within 10 to 20 minutes post injection. Animals remain totally flaccid, and no symptoms of excitatory neurotoxicity are observed. In Ceratogyrus marshalli (Straighthorned baboon tarantula), this protein is Beta-theraphotoxin-Cm1a.